The chain runs to 262 residues: Protein crossbronx-like (262 aa).

The 165-residue stretch at 15–179 folds into the UBC core domain; sequence RQGYQVLAEY…VQELALFTKK (165 aa).

Belongs to the ubiquitin-conjugating enzyme family. FTS subfamily.

This chain is Protein crossbronx-like, found in Drosophila pseudoobscura pseudoobscura (Fruit fly).